The chain runs to 257 residues: Ribosomal RNA small subunit methyltransferase J (257 aa).

Residues 107–108, 123–124, and D177 contribute to the S-adenosyl-L-methionine site; these read RD and ER.

The protein belongs to the methyltransferase superfamily. RsmJ family.

It is found in the cytoplasm. It catalyses the reaction guanosine(1516) in 16S rRNA + S-adenosyl-L-methionine = N(2)-methylguanosine(1516) in 16S rRNA + S-adenosyl-L-homocysteine + H(+). Specifically methylates the guanosine in position 1516 of 16S rRNA. In Haemophilus influenzae (strain PittGG), this protein is Ribosomal RNA small subunit methyltransferase J.